The chain runs to 942 residues: Protein translocase subunit SecA (942 aa).

Residues glutamine 90, 108-112, and aspartate 509 contribute to the ATP site; that span reads GEGKT.

This sequence belongs to the SecA family. As to quaternary structure, monomer and homodimer. Part of the essential Sec protein translocation apparatus which comprises SecA, SecYEG and auxiliary proteins SecDF. Other proteins may also be involved.

The protein localises to the cell inner membrane. The protein resides in the cellular thylakoid membrane. It is found in the cytoplasm. The catalysed reaction is ATP + H2O + cellular proteinSide 1 = ADP + phosphate + cellular proteinSide 2.. In terms of biological role, part of the Sec protein translocase complex. Interacts with the SecYEG preprotein conducting channel. Has a central role in coupling the hydrolysis of ATP to the transfer of proteins into and across the cell membrane, serving as an ATP-driven molecular motor driving the stepwise translocation of polypeptide chains across the membrane. Its function is as follows. Probably participates in protein translocation into and across both the cytoplasmic and thylakoid membranes in cyanobacterial cells. This chain is Protein translocase subunit SecA, found in Prochlorococcus marinus (strain NATL2A).